Here is a 289-residue protein sequence, read N- to C-terminus: Protein charybde (289 aa).

The disordered stretch occupies residues T119 to T142.

The protein belongs to the DDIT4 family.

The protein localises to the cytoplasm. In terms of biological role, inhibits cell growth by regulating the Tor pathway upstream of the Tsc1-Tsc2 complex and downstream of Akt1. Acts as a cell death activator during head development. This chain is Protein charybde (chrb), found in Drosophila pseudoobscura pseudoobscura (Fruit fly).